The chain runs to 154 residues: Ribosomal RNA large subunit methyltransferase H (154 aa).

S-adenosyl-L-methionine-binding positions include Leu-70, Gly-102, and 121 to 126 (LSRMTL).

Belongs to the RNA methyltransferase RlmH family. As to quaternary structure, homodimer.

The protein localises to the cytoplasm. It carries out the reaction pseudouridine(1915) in 23S rRNA + S-adenosyl-L-methionine = N(3)-methylpseudouridine(1915) in 23S rRNA + S-adenosyl-L-homocysteine + H(+). In terms of biological role, specifically methylates the pseudouridine at position 1915 (m3Psi1915) in 23S rRNA. This chain is Ribosomal RNA large subunit methyltransferase H, found in Geobacter sp. (strain M21).